Consider the following 320-residue polypeptide: o-succinylbenzoate synthase (320 aa).

The active-site Proton donor is Lys-133. Positions 161, 190, and 213 each coordinate Mg(2+). Lys-235 (proton acceptor) is an active-site residue.

Belongs to the mandelate racemase/muconate lactonizing enzyme family. MenC type 1 subfamily. The cofactor is a divalent metal cation.

The catalysed reaction is (1R,6R)-6-hydroxy-2-succinyl-cyclohexa-2,4-diene-1-carboxylate = 2-succinylbenzoate + H2O. Its pathway is quinol/quinone metabolism; 1,4-dihydroxy-2-naphthoate biosynthesis; 1,4-dihydroxy-2-naphthoate from chorismate: step 4/7. It functions in the pathway quinol/quinone metabolism; menaquinone biosynthesis. Functionally, converts 2-succinyl-6-hydroxy-2,4-cyclohexadiene-1-carboxylate (SHCHC) to 2-succinylbenzoate (OSB). The polypeptide is o-succinylbenzoate synthase (Salmonella typhi).